Here is a 288-residue protein sequence, read N- to C-terminus: 33 kDa chaperonin (288 aa).

2 disulfides stabilise this stretch: Cys-236–Cys-238 and Cys-269–Cys-272.

Belongs to the HSP33 family. Under oxidizing conditions two disulfide bonds are formed involving the reactive cysteines. Under reducing conditions zinc is bound to the reactive cysteines and the protein is inactive.

The protein localises to the cytoplasm. In terms of biological role, redox regulated molecular chaperone. Protects both thermally unfolding and oxidatively damaged proteins from irreversible aggregation. Plays an important role in the bacterial defense system toward oxidative stress. This is 33 kDa chaperonin from Syntrophotalea carbinolica (strain DSM 2380 / NBRC 103641 / GraBd1) (Pelobacter carbinolicus).